The chain runs to 451 residues: Proline--tRNA ligase (451 aa).

Belongs to the class-II aminoacyl-tRNA synthetase family. ProS type 2 subfamily. Homodimer.

The protein localises to the cytoplasm. The catalysed reaction is tRNA(Pro) + L-proline + ATP = L-prolyl-tRNA(Pro) + AMP + diphosphate. Functionally, catalyzes the attachment of proline to tRNA(Pro) in a two-step reaction: proline is first activated by ATP to form Pro-AMP and then transferred to the acceptor end of tRNA(Pro). This is Proline--tRNA ligase from Ruegeria sp. (strain TM1040) (Silicibacter sp.).